A 170-amino-acid polypeptide reads, in one-letter code: Crossover junction endodeoxyribonuclease RuvC (170 aa).

Active-site residues include Asp-9, Glu-70, and Asp-145. Asp-9, Glu-70, and Asp-145 together coordinate Mg(2+).

This sequence belongs to the RuvC family. As to quaternary structure, homodimer which binds Holliday junction (HJ) DNA. The HJ becomes 2-fold symmetrical on binding to RuvC with unstacked arms; it has a different conformation from HJ DNA in complex with RuvA. In the full resolvosome a probable DNA-RuvA(4)-RuvB(12)-RuvC(2) complex forms which resolves the HJ. Requires Mg(2+) as cofactor.

The protein resides in the cytoplasm. It carries out the reaction Endonucleolytic cleavage at a junction such as a reciprocal single-stranded crossover between two homologous DNA duplexes (Holliday junction).. Its function is as follows. The RuvA-RuvB-RuvC complex processes Holliday junction (HJ) DNA during genetic recombination and DNA repair. Endonuclease that resolves HJ intermediates. Cleaves cruciform DNA by making single-stranded nicks across the HJ at symmetrical positions within the homologous arms, yielding a 5'-phosphate and a 3'-hydroxyl group; requires a central core of homology in the junction. The consensus cleavage sequence is 5'-(A/T)TT(C/G)-3'. Cleavage occurs on the 3'-side of the TT dinucleotide at the point of strand exchange. HJ branch migration catalyzed by RuvA-RuvB allows RuvC to scan DNA until it finds its consensus sequence, where it cleaves and resolves the cruciform DNA. This is Crossover junction endodeoxyribonuclease RuvC from Chlamydia trachomatis serovar L2 (strain ATCC VR-902B / DSM 19102 / 434/Bu).